A 136-amino-acid chain; its full sequence is Phosphoribosyl-AMP cyclohydrolase (136 aa).

Asp89 serves as a coordination point for Mg(2+). Cys90 serves as a coordination point for Zn(2+). Residues Asp91 and Asp93 each coordinate Mg(2+). Zn(2+)-binding residues include Cys106 and Cys113.

Belongs to the PRA-CH family. In terms of assembly, homodimer. Requires Mg(2+) as cofactor. Zn(2+) is required as a cofactor.

Its subcellular location is the cytoplasm. The enzyme catalyses 1-(5-phospho-beta-D-ribosyl)-5'-AMP + H2O = 1-(5-phospho-beta-D-ribosyl)-5-[(5-phospho-beta-D-ribosylamino)methylideneamino]imidazole-4-carboxamide. The protein operates within amino-acid biosynthesis; L-histidine biosynthesis; L-histidine from 5-phospho-alpha-D-ribose 1-diphosphate: step 3/9. Functionally, catalyzes the hydrolysis of the adenine ring of phosphoribosyl-AMP. This chain is Phosphoribosyl-AMP cyclohydrolase, found in Bifidobacterium longum subsp. infantis (strain ATCC 15697 / DSM 20088 / JCM 1222 / NCTC 11817 / S12).